A 272-amino-acid chain; its full sequence is L-aspartate dehydrogenase 3 (272 aa).

Residues Ala-126 and Asn-194 each coordinate NAD(+). His-224 is an active-site residue.

The protein belongs to the L-aspartate dehydrogenase family.

It catalyses the reaction L-aspartate + NADP(+) + H2O = oxaloacetate + NH4(+) + NADPH + H(+). It carries out the reaction L-aspartate + NAD(+) + H2O = oxaloacetate + NH4(+) + NADH + H(+). The protein operates within cofactor biosynthesis; NAD(+) biosynthesis; iminoaspartate from L-aspartate (dehydrogenase route): step 1/1. Specifically catalyzes the NAD or NADP-dependent dehydrogenation of L-aspartate to iminoaspartate. The protein is L-aspartate dehydrogenase 3 of Bordetella bronchiseptica (strain ATCC BAA-588 / NCTC 13252 / RB50) (Alcaligenes bronchisepticus).